The chain runs to 784 residues: Toll-like receptor 2 (784 aa).

The N-terminal stretch at 1 to 18 (MPHTLWMVWVLGVIISLS) is a signal peptide. Residues 19–587 (KEESSNQASL…VRLSVSECHR (569 aa)) lie on the Extracellular side of the membrane. C30 and C36 form a disulfide bridge. LRR repeat units lie at residues 54–77 (VKSLDLSNNRITYISNSDLQRYVN), 78–101 (LQALVLTSNGINTIEEDSFSSLGR), 102–125 (LEHLDLSYNYLSNLSSSWFKPLSS), 126–150 (LKFLNLLGNPYKTLGETSLFSHLTK), 151–175 (LRILRVGNMDTFTKIQRKDFAGLTF), 176–199 (LEELEIDASDLQSYEPKSLKSIQN), 200–223 (VSHLILHMKQHILLLEIFVDLTSS), 224–250 (VECLELRDTDLDTFHFSELSTGETNSL), 251–278 (IKKFTFRNVKITDESLFQVMKLLSQISG), 279–308 (LLELEFDDCTLNGVGDFRGSDNDRVIDPGK), 309–337 (VETVTIRRLHIPQFYSFNDLSTLYPLTER), 338–361 (VKRITVENSKVFLVPCLLSRHLKS), 362–388 (LEYLDLSENLMVEEYLKNSACEDAWPS), 389–414 (LQTLILRQNHLASLGKTGETLLTLKN), 415–437 (LTNLDISKNTFHYMPETCQWPEK), 438–457 (MKYLNLSSTRIHSVTGCIPK), 458–478 (TLEILDISNNNLNLFSLNLPQ), 479–500 (LKELYISRNKLMTLPDASLLPM), and 501–524 (LLVLKISRNTITTFSKEQLDSFHT). N114 carries N-linked (GlcNAc...) asparagine glycosylation. A glycan (N-linked (GlcNAc...) asparagine) is linked at N199. An intrachain disulfide couples C353 to C382. N-linked (GlcNAc...) asparagine glycosylation is present at N414. Cysteines 432 and 454 form a disulfide. Residue N442 is glycosylated (N-linked (GlcNAc...) asparagine). Residues 525 to 579 (LKTLEAGGNNFICSCEFLSFTQEQQALAKVLVDWPANYLCDSPSHVRGQRVQDVR) form the LRRCT domain. A helical membrane pass occupies residues 588–608 (AALVSGMCCALFLLILLMGVL). Topologically, residues 609–784 (CHRFHGLWYM…WVNLRAAIKS (176 aa)) are cytoplasmic. Positions 639-782 (ICYDAFVSYS…GFWVNLRAAI (144 aa)) constitute a TIR domain. Residue K754 forms a Glycyl lysine isopeptide (Lys-Gly) (interchain with G-Cter in ubiquitin) linkage. Residues 761–778 (YLEWPMDEARQEGFWVNL) carry the ATG16L1-binding motif motif.

Belongs to the Toll-like receptor family. As to quaternary structure, interacts with LY96, TLR1 and TLR6 (via extracellular domain). TLR2 seems to exist in heterodimers with either TLR1 or TLR6 before stimulation by the ligand. The heterodimers form bigger oligomers in response to their corresponding ligands as well as further heterotypic associations with other receptors such as CD14 and/or CD36. Binds MYD88 (via TIR domain). Interacts with TICAM1. Interacts with CNPY3. Interacts with ATG16L1. Interacts with PPP1R11. Interacts with TICAM2. Interacts with TIRAP. Ubiquitinated at Lys-754 by PPP1R11, leading to its degradation. Deubiquitinated by USP2. In terms of processing, glycosylation of Asn-442 is critical for secretion of the N-terminal ectodomain of TLR2.

It is found in the membrane. It localises to the cytoplasmic vesicle. The protein resides in the phagosome membrane. The protein localises to the membrane raft. In terms of biological role, cooperates with LY96 to mediate the innate immune response to bacterial lipoproteins and other microbial cell wall components. Cooperates with TLR1 or TLR6 to mediate the innate immune response to bacterial lipoproteins or lipopeptides. Acts via MYD88 and TRAF6, leading to NF-kappa-B activation, cytokine secretion and the inflammatory response. May also promote apoptosis in response to lipoproteins. Forms activation clusters composed of several receptors depending on the ligand, these clusters trigger signaling from the cell surface and subsequently are targeted to the Golgi in a lipid-raft dependent pathway. Forms the cluster TLR2:TLR6:CD14:CD36 in response to diacylated lipopeptides and TLR2:TLR1:CD14 in response to triacylated lipopeptides. The polypeptide is Toll-like receptor 2 (TLR2) (Macaca fascicularis (Crab-eating macaque)).